The primary structure comprises 811 residues: Ribosome biogenesis protein ERB1 (811 aa).

Positions 1–11 (MARNSKATDTP) are enriched in polar residues. The interval 1–138 (MARNSKATDT…VHTKFSDGRP (138 aa)) is disordered. The span at 27 to 96 (EDAEESSSDE…LSDVDSEEFS (70 aa)) shows a compositional bias: acidic residues. The segment covering 104 to 121 (ASITDKLSGTKIRSYSNA) has biased composition (polar residues). Over residues 128–138 (EVHTKFSDGRP) the composition is skewed to basic and acidic residues. The tract at residues 270–386 (RFVPSKHEAK…LRKVPGYQEG (117 aa)) is required for interaction with NOP7. The tract at residues 386 to 422 (GLRERFERCLDLYLAPRTRHNKLNIDPDSLIPELPSP) is required for interaction with YTM1. WD repeat units lie at residues 438–477 (GHTE…QVYK) and 485–525 (NTDD…FDIE). The disordered stretch occupies residues 547-566 (TKNSNIKVNSDDEDEEVEKA). 5 WD repeats span residues 595-637 (QCRK…SQSP), 640-678 (KSKG…LVKK), 681-720 (PGAR…TPYK), 724-764 (YHDK…DLMT), and 780-811 (INSL…LWTT).

This sequence belongs to the WD repeat BOP1/ERB1 family. Component of the NOP7 complex, composed of ERB1, NOP7 and YTM1. The complex is held together by ERB1, which interacts with NOP7 via its N-terminal domain and with YTM1 via a high-affinity interaction between the seven-bladed beta-propeller domains of the 2 proteins. The NOP7 complex associates with the 66S pre-ribosome.

It localises to the nucleus. The protein resides in the nucleolus. Its subcellular location is the nucleoplasm. In terms of biological role, component of the NOP7 complex, which is required for maturation of the 25S and 5.8S ribosomal RNAs and formation of the 60S ribosome. This chain is Ribosome biogenesis protein ERB1, found in Debaryomyces hansenii (strain ATCC 36239 / CBS 767 / BCRC 21394 / JCM 1990 / NBRC 0083 / IGC 2968) (Yeast).